Here is a 153-residue protein sequence, read N- to C-terminus: uncharacterized protein (153 aa).

The signal sequence occupies residues 1-22 (MKMLKKGTAVLFVMIMAVMLVA). Cys-23 carries the N-palmitoyl cysteine lipid modification. Cys-23 is lipidated: S-diacylglycerol cysteine. The disordered stretch occupies residues 117–153 (DMNKIPGMSSNGDTSKGISMEESAKMLESQGYKEVSK). Over residues 124–133 (MSSNGDTSKG) the composition is skewed to polar residues.

It to E.coli YehR.

It is found in the cell membrane. This is an uncharacterized protein from Listeria monocytogenes serovar 1/2a (strain ATCC BAA-679 / EGD-e).